Consider the following 488-residue polypeptide: Serine hydroxymethyltransferase, mitochondrial (488 aa).

A mitochondrion-targeting transit peptide spans 1-20; the sequence is MAVLRQFVKNSYSSIPKRFY. The residue at position 265 (K265) is an N6-(pyridoxal phosphate)lysine.

Belongs to the SHMT family. Homotetramer. Pyridoxal 5'-phosphate serves as cofactor.

It localises to the mitochondrion. The catalysed reaction is (6R)-5,10-methylene-5,6,7,8-tetrahydrofolate + glycine + H2O = (6S)-5,6,7,8-tetrahydrofolate + L-serine. Its pathway is one-carbon metabolism; tetrahydrofolate interconversion. In terms of biological role, interconversion of serine and glycine. This is Serine hydroxymethyltransferase, mitochondrial (shm2) from Schizosaccharomyces pombe (strain 972 / ATCC 24843) (Fission yeast).